We begin with the raw amino-acid sequence, 741 residues long: Linoleate 9S-lipoxygenase (741 aa).

Residues 1-53 (IPGAFYIKNFMQVEFYLKSLTLEDIPNHGTIHFICNSWIYNSKVYKSDRIFFA) form the PLAT domain. The region spanning 56-741 (TYLPSETPAP…SEEGLTFRGI (686 aa)) is the Lipoxygenase domain. A disordered region spans residues 108-144 (ALARPVLGGSTLPYPRRGRTGRPKTKKDPNSEKPSDF). Positions 123–132 (RRGRTGRPKT) are enriched in basic residues. Basic and acidic residues predominate over residues 133–144 (KKDPNSEKPSDF). The Fe cation site is built by His-407, His-412, His-598, and Asn-602.

Belongs to the lipoxygenase family. As to quaternary structure, monomer. The cofactor is Fe cation.

It is found in the cytoplasm. The catalysed reaction is (9Z,12Z)-octadecadienoate + O2 = (9S)-hydroperoxy-(10E,12Z)-octadecadienoate. The enzyme catalyses (9Z,12Z)-octadecadienoate + O2 = (13S)-hydroperoxy-(9Z,11E)-octadecadienoate. It carries out the reaction (9Z,12Z,15Z)-octadecatrienoate + O2 = (13S)-hydroperoxy-(9Z,11E,15Z)-octadecatrienoate. It functions in the pathway lipid metabolism; oxylipin biosynthesis. Plant lipoxygenase may be involved in a number of diverse aspects of plant physiology including growth and development, pest resistance, and senescence or responses to wounding. It catalyzes the hydroperoxidation of lipids containing a cis,cis-1,4-pentadiene structure. This chain is Linoleate 9S-lipoxygenase, found in Phaseolus vulgaris (Kidney bean).